Here is a 269-residue protein sequence, read N- to C-terminus: Probable ribosomal RNA small subunit methyltransferase A (269 aa).

Positions 19, 21, 46, 67, 92, and 107 each coordinate S-adenosyl-L-methionine.

Belongs to the class I-like SAM-binding methyltransferase superfamily. rRNA adenine N(6)-methyltransferase family. RsmA subfamily.

The protein localises to the cytoplasm. Specifically dimethylates two adjacent adenosines in the loop of a conserved hairpin near the 3'-end of 16S rRNA in the 30S particle. May play a critical role in biogenesis of 30S subunits. This chain is Probable ribosomal RNA small subunit methyltransferase A, found in Methanosarcina acetivorans (strain ATCC 35395 / DSM 2834 / JCM 12185 / C2A).